We begin with the raw amino-acid sequence, 338 residues long: Glycerol-1-phosphate dehydrogenase [NAD(P)+] (338 aa).

NAD(+) contacts are provided by residues Gly-81–Asp-85 and Thr-103–Ser-106. Asp-108 serves as a coordination point for substrate. Position 112 (Ser-112) interacts with NAD(+). Asp-157 is a substrate binding site. Zn(2+)-binding residues include Asp-157 and His-238. His-242 provides a ligand contact to substrate. A Zn(2+)-binding site is contributed by His-256.

The protein belongs to the glycerol-1-phosphate dehydrogenase family. In terms of assembly, homodimer. Requires Zn(2+) as cofactor.

It localises to the cytoplasm. The enzyme catalyses sn-glycerol 1-phosphate + NAD(+) = dihydroxyacetone phosphate + NADH + H(+). It catalyses the reaction sn-glycerol 1-phosphate + NADP(+) = dihydroxyacetone phosphate + NADPH + H(+). It participates in membrane lipid metabolism; glycerophospholipid metabolism. In terms of biological role, catalyzes the NAD(P)H-dependent reduction of dihydroxyacetonephosphate (DHAP or glycerone phosphate) to glycerol 1-phosphate (G1P). The G1P thus generated is used as the glycerophosphate backbone of phospholipids in the cellular membranes of Archaea. The sequence is that of Glycerol-1-phosphate dehydrogenase [NAD(P)+] from Pyrobaculum calidifontis (strain DSM 21063 / JCM 11548 / VA1).